Consider the following 247-residue polypeptide: Sugar fermentation stimulation protein homolog (247 aa).

Belongs to the SfsA family.

This is Sugar fermentation stimulation protein homolog from Aeromonas hydrophila subsp. hydrophila (strain ATCC 7966 / DSM 30187 / BCRC 13018 / CCUG 14551 / JCM 1027 / KCTC 2358 / NCIMB 9240 / NCTC 8049).